Reading from the N-terminus, the 275-residue chain is Chemotaxis protein methyltransferase Cher2 (275 aa).

Residues 1–275 (MSTGNLDFEQ…CSPGIIYQAK (275 aa)) form the CheR-type methyltransferase domain. Residues Asn73, Thr75, Arg79, Glu116, Asp145, 201 to 202 (NL), and 218 to 219 (RN) each bind S-adenosyl-L-methionine.

Monomer.

It catalyses the reaction L-glutamyl-[protein] + S-adenosyl-L-methionine = [protein]-L-glutamate 5-O-methyl ester + S-adenosyl-L-homocysteine. Its function is as follows. Methylation of the membrane-bound methyl-accepting chemotaxis proteins (MCP) to form gamma-glutamyl methyl ester residues in MCP. Methylates the McpS chemotaxis receptor. In Pseudomonas putida (strain ATCC 47054 / DSM 6125 / CFBP 8728 / NCIMB 11950 / KT2440), this protein is Chemotaxis protein methyltransferase Cher2 (cheR2).